The sequence spans 526 residues: Aspartate ammonia-lyase (526 aa).

Residues 1-44 (MSKTSNKSSADSKNDAKAEDIVNGENQIATNESQSSDSAAVSER) are disordered. Basic and acidic residues predominate over residues 10-20 (ADSKNDAKAED). Residues 24–39 (GENQIATNESQSSDSA) are compositionally biased toward polar residues. Positions 155, 194, 195, 196, and 241 each coordinate L-aspartate. The SS loop stretch occupies residues 371 to 380 (GSSIMPAKVN). Serine 372 functions as the Proton acceptor in the catalytic mechanism. L-aspartate-binding residues include serine 373 and lysine 378.

The protein belongs to the class-II fumarase/aspartase family. Aspartase subfamily. Homotetramer.

It catalyses the reaction L-aspartate = fumarate + NH4(+). Functionally, catalyzes the reversible conversion of L-aspartate to fumarate and ammonia. This is Aspartate ammonia-lyase from Corynebacterium glutamicum (strain ATCC 13032 / DSM 20300 / JCM 1318 / BCRC 11384 / CCUG 27702 / LMG 3730 / NBRC 12168 / NCIMB 10025 / NRRL B-2784 / 534).